The chain runs to 365 residues: Phospho-N-acetylmuramoyl-pentapeptide-transferase (365 aa).

10 consecutive transmembrane segments (helical) span residues 19–39, 49–69, 92–112, 116–136, 156–176, 183–203, 215–235, 238–258, 279–299, and 345–365; these read TLLI…SSWA, LLIA…AVVP, AGTP…IAVV, FNPD…IGWV, LFLQ…YGPT, IMQF…FALV, VDGL…LLVA, NPAL…FVHH, LAAV…SGIF, and QIVG…MATA.

It belongs to the glycosyltransferase 4 family. MraY subfamily. Mg(2+) serves as cofactor.

The protein localises to the cell inner membrane. The enzyme catalyses UDP-N-acetyl-alpha-D-muramoyl-L-alanyl-gamma-D-glutamyl-meso-2,6-diaminopimeloyl-D-alanyl-D-alanine + di-trans,octa-cis-undecaprenyl phosphate = di-trans,octa-cis-undecaprenyl diphospho-N-acetyl-alpha-D-muramoyl-L-alanyl-D-glutamyl-meso-2,6-diaminopimeloyl-D-alanyl-D-alanine + UMP. Its pathway is cell wall biogenesis; peptidoglycan biosynthesis. Catalyzes the initial step of the lipid cycle reactions in the biosynthesis of the cell wall peptidoglycan: transfers peptidoglycan precursor phospho-MurNAc-pentapeptide from UDP-MurNAc-pentapeptide onto the lipid carrier undecaprenyl phosphate, yielding undecaprenyl-pyrophosphoryl-MurNAc-pentapeptide, known as lipid I. The chain is Phospho-N-acetylmuramoyl-pentapeptide-transferase from Synechocystis sp. (strain ATCC 27184 / PCC 6803 / Kazusa).